Reading from the N-terminus, the 457-residue chain is Putative HD domain-containing protein L394 (457 aa).

The region spanning 65–206 (RLEHSIGVYD…GIDVDKFDYL (142 aa)) is the HD domain.

In Acanthamoeba polyphaga mimivirus (APMV), this protein is Putative HD domain-containing protein L394.